Reading from the N-terminus, the 862-residue chain is MACGAAERGPEPPAFQRHLEASTQRLAHGYGLRSMSELRDQEFGRLAGTVYLDHAGATLFPQSQLTNFTKDLMENVYGNPHSQNITSKLTHDTVEQVRYRILTHFHTTPEDYIVIFTAGSTAALRLVAEAFPWVSRSPENSGSHFCYLTDNHTSVVGMRKVAAAMSVTSIPVKPEDMWSAEGKDAGACDPDCQLPHLFCYPAQSNFSGTRYPLSWVEEVKSGRRSPVNAPGKWFVLLDAASYVSTSPLDLSAHQADFIPISFYKIFGLPTGLGALLVNKHVAPLLRKGYFGGGTAAAYLAGEDFYVPRSSVAERFEDGTISFLDVIALKHGFDALEHLTGGMVNIQQHTFALVQYTHSALSSLRYLNGAPVVRIYSDSEFSSPDVQGPIINFNVLDDGGKIIGYSQVDKMASLYNIHLRTGCFCNLGACQRHLGLSDEMVKKHFQAGHVCGDDVDIIDGRPTGSVRISFGYMSTLEDAQAFLRFISTIYLRSPSDQPVPQASISDAGALTSKSDCHSPQEGSCTDPSVCNGSYPDTNIMDLHPSLSKASSAQQTPQDKAAGILNGDPGSHIVTNIYLYPIKSCAAFEVTKWPVGSQGLLYDRSWMVVNHNGICMSQKQEPRLCLIQPFIDLQQRIMVIKAEGMEPIQVPLEEDGEQTQICQSRVCADRVNTYDCGENVSRWLSKFLGRLCHLIKQSPHFQRNARKTPKKGQPPGTTVALSLVNEAQYLLVNTSSILELQRQLNASDEHGKEESFSMKDLISRFRANIITKGARAFEEEKWDEISIGSLHFQVLGPCHRCQMICINQQTGQRNQDVFQTLSESRGRKVNFGVYLMHSYLDLSSPCFLSVGSEVLPVLKDCGVS.

Serine 34 carries the post-translational modification Phosphoserine. An N6-(pyridoxal phosphate)lysine modification is found at lysine 264. Cysteine 424 is an active-site residue. Serine 517 is subject to Phosphoserine. Positions 704-855 (RKTPKKGQPP…LSVGSEVLPV (152 aa)) constitute an MOSC domain.

This sequence belongs to the class-V pyridoxal-phosphate-dependent aminotransferase family. MOCOS subfamily. Pyridoxal 5'-phosphate serves as cofactor.

It catalyses the reaction Mo-molybdopterin + L-cysteine + AH2 = thio-Mo-molybdopterin + L-alanine + A + H2O. Its pathway is cofactor biosynthesis; molybdopterin biosynthesis. Sulfurates the molybdenum cofactor. Sulfation of molybdenum is essential for xanthine dehydrogenase (XDH) and aldehyde oxidase (ADO) enzymes in which molybdenum cofactor is liganded by 1 oxygen and 1 sulfur atom in active form. The sequence is that of Molybdenum cofactor sulfurase (Mocos) from Mus musculus (Mouse).